We begin with the raw amino-acid sequence, 292 residues long: UDP-3-O-acyl-N-acetylglucosamine deacetylase (292 aa).

Zn(2+)-binding residues include histidine 75, histidine 231, and aspartate 235. Residue histidine 258 is the Proton donor of the active site.

It belongs to the LpxC family. It depends on Zn(2+) as a cofactor.

The catalysed reaction is a UDP-3-O-[(3R)-3-hydroxyacyl]-N-acetyl-alpha-D-glucosamine + H2O = a UDP-3-O-[(3R)-3-hydroxyacyl]-alpha-D-glucosamine + acetate. The protein operates within glycolipid biosynthesis; lipid IV(A) biosynthesis; lipid IV(A) from (3R)-3-hydroxytetradecanoyl-[acyl-carrier-protein] and UDP-N-acetyl-alpha-D-glucosamine: step 2/6. Its function is as follows. Catalyzes the hydrolysis of UDP-3-O-myristoyl-N-acetylglucosamine to form UDP-3-O-myristoylglucosamine and acetate, the committed step in lipid A biosynthesis. The polypeptide is UDP-3-O-acyl-N-acetylglucosamine deacetylase (Nautilia profundicola (strain ATCC BAA-1463 / DSM 18972 / AmH)).